A 553-amino-acid chain; its full sequence is Putative transport protein Ent638_0015 (553 aa).

A run of 5 helical transmembrane segments spans residues 4–24 (IALT…IGNI), 28–48 (GVGL…HFAE), 65–85 (FGLI…FFAS), 95–115 (LFAL…HKLF), and 158–178 (MSYA…MWLV). 2 consecutive RCK C-terminal domains span residues 191–276 (KKHE…VIGQ) and 279–361 (ETSL…MVGN). 6 consecutive transmembrane segments (helical) span residues 371-391 (MLPV…PLYV), 403-425 (AGGP…LYWF), 439-459 (IVLF…DTLA), 464-484 (ISWI…IGIL), 493-513 (YLTL…LAFA), and 533-553 (LVMF…WGMG).

The protein belongs to the AAE transporter (TC 2.A.81) family. YidE subfamily.

The protein resides in the cell membrane. The polypeptide is Putative transport protein Ent638_0015 (Enterobacter sp. (strain 638)).